The primary structure comprises 152 residues: 6,7-dimethyl-8-ribityllumazine synthase (152 aa).

5-amino-6-(D-ribitylamino)uracil is bound by residues Phe22, 56–58, and 79–81; these read AFE and AVI. 84-85 contacts (2S)-2-hydroxy-3-oxobutyl phosphate; it reads AT. Catalysis depends on His87, which acts as the Proton donor. Phe112 provides a ligand contact to 5-amino-6-(D-ribitylamino)uracil. Arg126 lines the (2S)-2-hydroxy-3-oxobutyl phosphate pocket.

Belongs to the DMRL synthase family.

It catalyses the reaction (2S)-2-hydroxy-3-oxobutyl phosphate + 5-amino-6-(D-ribitylamino)uracil = 6,7-dimethyl-8-(1-D-ribityl)lumazine + phosphate + 2 H2O + H(+). The protein operates within cofactor biosynthesis; riboflavin biosynthesis; riboflavin from 2-hydroxy-3-oxobutyl phosphate and 5-amino-6-(D-ribitylamino)uracil: step 1/2. In terms of biological role, catalyzes the formation of 6,7-dimethyl-8-ribityllumazine by condensation of 5-amino-6-(D-ribitylamino)uracil with 3,4-dihydroxy-2-butanone 4-phosphate. This is the penultimate step in the biosynthesis of riboflavin. The chain is 6,7-dimethyl-8-ribityllumazine synthase from Carboxydothermus hydrogenoformans (strain ATCC BAA-161 / DSM 6008 / Z-2901).